A 188-amino-acid polypeptide reads, in one-letter code: MIKNSNINSNSRLDDPILQEIELNKVEIGKHASWSVSSAKPGSGVEQLRDNNLDTFWQSDAQQPHHITIQFPKKCYIENLLIHCDYKLDESYTPCKISIKAGTILHDLQEIILTELEEPSGWINIPLSFNNNSLKANLLQISILSNLKNGRDSHIRQIKVYGKKISIENYTQYPKFNSPEVSMFQTLR.

The 184-residue stretch at 4–187 folds into the DOC domain; that stretch reads NSNINSNSRL…SPEVSMFQTL (184 aa).

The protein belongs to the APC10 family. The APC/C is composed of at least 13 subunits that stay tightly associated throughout the cell cycle: anapc1, anapc2, anapc3, anapc4, anapc5, anapc6, anapc7, anapc8, anapc10, anapc11, cdc20, cdc26 and cdh1.

The protein resides in the nucleus. The protein operates within protein modification; protein ubiquitination. Functionally, component of the anaphase promoting complex/cyclosome (APC/C), a cell cycle-regulated E3 ubiquitin-protein ligase complex that controls progression through mitosis and the G1 phase of the cell cycle. The protein is Anaphase-promoting complex subunit 10 (anapc10) of Dictyostelium discoideum (Social amoeba).